The primary structure comprises 424 residues: Tyrosine--tRNA ligase (424 aa).

L-tyrosine is bound at residue Y37. Residues 42 to 51 (PTADSLHLGH) carry the 'HIGH' region motif. Y175 and Q179 together coordinate L-tyrosine. The 'KMSKS' region motif lies at 235–239 (KFGKT). K238 provides a ligand contact to ATP. Residues 357–414 (ADLQQALVAAELVPSRGQARTLISSNAVSVNGEKQASIDYVFDDADRLYSRYTLLRRG) enclose the S4 RNA-binding domain.

Belongs to the class-I aminoacyl-tRNA synthetase family. TyrS type 1 subfamily. In terms of assembly, homodimer.

The protein resides in the cytoplasm. The enzyme catalyses tRNA(Tyr) + L-tyrosine + ATP = L-tyrosyl-tRNA(Tyr) + AMP + diphosphate + H(+). Its function is as follows. Catalyzes the attachment of tyrosine to tRNA(Tyr) in a two-step reaction: tyrosine is first activated by ATP to form Tyr-AMP and then transferred to the acceptor end of tRNA(Tyr). The polypeptide is Tyrosine--tRNA ligase (Sodalis glossinidius (strain morsitans)).